The chain runs to 668 residues: Fructose-1,6-bisphosphatase class 3 (668 aa).

It belongs to the FBPase class 3 family. It depends on Mn(2+) as a cofactor.

It carries out the reaction beta-D-fructose 1,6-bisphosphate + H2O = beta-D-fructose 6-phosphate + phosphate. It participates in carbohydrate biosynthesis; gluconeogenesis. The polypeptide is Fructose-1,6-bisphosphatase class 3 (Clostridium botulinum (strain Kyoto / Type A2)).